Here is a 122-residue protein sequence, read N- to C-terminus: Large ribosomal subunit protein uL14 (122 aa).

It belongs to the universal ribosomal protein uL14 family. As to quaternary structure, part of the 50S ribosomal subunit. Forms a cluster with proteins L3 and L19. In the 70S ribosome, L14 and L19 interact and together make contacts with the 16S rRNA in bridges B5 and B8.

Binds to 23S rRNA. Forms part of two intersubunit bridges in the 70S ribosome. The polypeptide is Large ribosomal subunit protein uL14 (Ruegeria pomeroyi (strain ATCC 700808 / DSM 15171 / DSS-3) (Silicibacter pomeroyi)).